Consider the following 351-residue polypeptide: uncharacterized protein (351 aa).

Residues His-23, His-25, Lys-151, His-184, His-212, and Asp-270 each coordinate Zn(2+). Lys-151 carries the post-translational modification N6-carboxylysine.

It belongs to the metallo-dependent hydrolases superfamily. Phosphotriesterase family. Zn(2+) serves as cofactor.

This is an uncharacterized protein from Mycoplasma pneumoniae (strain ATCC 29342 / M129 / Subtype 1) (Mycoplasmoides pneumoniae).